Here is a 372-residue protein sequence, read N- to C-terminus: Transaldolase 2 (372 aa).

Lys140 serves as the catalytic Schiff-base intermediate with substrate.

The protein belongs to the transaldolase family. Type 2 subfamily.

Its subcellular location is the cytoplasm. The catalysed reaction is D-sedoheptulose 7-phosphate + D-glyceraldehyde 3-phosphate = D-erythrose 4-phosphate + beta-D-fructose 6-phosphate. It participates in carbohydrate degradation; pentose phosphate pathway; D-glyceraldehyde 3-phosphate and beta-D-fructose 6-phosphate from D-ribose 5-phosphate and D-xylulose 5-phosphate (non-oxidative stage): step 2/3. In terms of biological role, transaldolase is important for the balance of metabolites in the pentose-phosphate pathway. In Streptomyces avermitilis (strain ATCC 31267 / DSM 46492 / JCM 5070 / NBRC 14893 / NCIMB 12804 / NRRL 8165 / MA-4680), this protein is Transaldolase 2.